The primary structure comprises 367 residues: Alcohol dehydrogenase 2 (367 aa).

7 residues coordinate Zn(2+): C48, H74, C107, C110, C113, C121, and C163. NAD(+) is bound by residues 187–193 (GAGGGLG), D212, K216, 286–288 (VGI), and R361.

The protein belongs to the zinc-containing alcohol dehydrogenase family. In terms of assembly, homotetramer. Zn(2+) serves as cofactor.

The protein resides in the cytoplasm. It carries out the reaction a primary alcohol + NAD(+) = an aldehyde + NADH + H(+). It catalyses the reaction a secondary alcohol + NAD(+) = a ketone + NADH + H(+). The chain is Alcohol dehydrogenase 2 (alcB) from Emericella nidulans (strain FGSC A4 / ATCC 38163 / CBS 112.46 / NRRL 194 / M139) (Aspergillus nidulans).